A 1478-amino-acid chain; its full sequence is Zinc finger protein 518A (1478 aa).

4 C2H2-type zinc fingers span residues 152–174 (FPCEMCSFSASDFQIFKQHRKTH), 209–231 (FQCEECRFFTQDVGTFVQHIHRH), 236–258 (YKCGKCHHLCFTKGELQKHLRVH), and 264–287 (FTCHYCSYGAIHKDQLVRHVITLH). Residues 355-394 (TQTKSEDQSQEQLNEEKGGRQHCEDGDKPIESGSEKATVL) are disordered. K358 is covalently cross-linked (Glycyl lysine isopeptide (Lys-Gly) (interchain with G-Cter in SUMO2)). Over residues 368-388 (NEEKGGRQHCEDGDKPIESGS) the composition is skewed to basic and acidic residues. Glycyl lysine isopeptide (Lys-Gly) (interchain with G-Cter in SUMO2) cross-links involve residues K390 and K428. Residues 464–484 (PSPALQPNTEKESTANLPPQA) are disordered. K518 participates in a covalent cross-link: Glycyl lysine isopeptide (Lys-Gly) (interchain with G-Cter in SUMO2). S652 is subject to Phosphoserine. Residues 656 to 694 (VCENLQRESSNKTVTQQSTSDSDTTSPLRKESSNSDSLL) form a disordered region. Residues 670-681 (TQQSTSDSDTTS) are compositionally biased toward low complexity. Residues K707, K792, K882, K895, K987, K1008, K1041, K1055, K1078, K1180, and K1441 each participate in a glycyl lysine isopeptide (Lys-Gly) (interchain with G-Cter in SUMO2) cross-link. A C2H2-type 5 zinc finger spans residues 1444 to 1466 (FNCWFCGRVFDNQDVWAGHGQRH).

This sequence belongs to the krueppel C2H2-type zinc-finger protein family.

The protein resides in the nucleus. In terms of biological role, through its association with the EHMT1-EHMT2/G9A and PRC2/EED-EZH2 histone methyltransferase complexes may function in gene silencing, regulating repressive post-translational methylation of histone tails at promoters of target genes. This is Zinc finger protein 518A (Znf518a) from Rattus norvegicus (Rat).